The chain runs to 86 residues: Small ribosomal subunit protein uS17 (86 aa).

The protein belongs to the universal ribosomal protein uS17 family. As to quaternary structure, part of the 30S ribosomal subunit.

Its function is as follows. One of the primary rRNA binding proteins, it binds specifically to the 5'-end of 16S ribosomal RNA. This is Small ribosomal subunit protein uS17 from Streptococcus thermophilus (strain CNRZ 1066).